Consider the following 360-residue polypeptide: MSYPEKFEGIAIQSHEDWKNPKKTKYDPKPFYDHDIDIKIEACGVCGSDIHCAAGHWGNMKMPLVVGHEIVGKVVKLGPKSNSGLKVGQRVGVGAQVFSCLECDRCKNDNEPYCTKFVTTYSQPYEDGYVSQGGYANYVRVHEHFVVPIPENIPSHLAAPLLCGGLTVYSPLVRNGCGPGKKVGIVGLGGIGSMGTLISKAMGAETYVISRSSRKREDAMKMGADHYIATLEEGDWGEKYFDTFDLIVVCASSLTDIDFNIMPKAMKVGGRIVSISIPEQHEMLSLKPYGLKAVSISYSALGSIKELNQLLKLVSEKDIKIWVETLPVGEAGVHEAFERMEKGDVRYRFTLVGYDKEFSD.

Residue cysteine 46 participates in Zn(2+) binding. Residues glycine 47 and histidine 51 each coordinate NADP(+). The Zn(2+) site is built by histidine 68, cysteine 100, cysteine 103, cysteine 106, and cysteine 114. The residue at position 131 (serine 131) is a Phosphoserine. Cysteine 163 serves as a coordination point for Zn(2+). NADP(+) contacts are provided by leucine 188, glycine 190, isoleucine 191, serine 210, arginine 211, lysine 215, cysteine 250, serine 252, threonine 255, aspartate 256, isoleucine 275, isoleucine 277, tyrosine 298, serine 299, leucine 301, and arginine 348. Serine 359 carries the post-translational modification Phosphoserine.

This sequence belongs to the zinc-containing alcohol dehydrogenase family. As to quaternary structure, homodimer. The cofactor is Zn(2+).

Its subcellular location is the cytoplasm. It is found in the nucleus. The catalysed reaction is a primary alcohol + NADP(+) = an aldehyde + NADPH + H(+). It catalyses the reaction (E)-cinnamyl alcohol + NADP(+) = (E)-cinnamaldehyde + NADPH + H(+). The enzyme catalyses hexan-1-ol + NADP(+) = hexanal + NADPH + H(+). It carries out the reaction 3-methylbutanol + NADP(+) = 3-methylbutanal + NADPH + H(+). The catalysed reaction is S-nitroso-CoA + NADPH + H(+) = sulfinamide-CoA + NADP(+). NADP-dependent, medium-chain alcohol dehydrogenase with a broad substrate specificity. Aldehydes exhibited 50-12000 times higher catalytic efficiency than the corresponding alcohols, therefore the major function of the enzyme is as an aldehyde reductase. The enzyme is active towards aromatic and aliphatic (linear and branched-chain) aldehydes. The enzyme is very active towards aromatic aldehydes, such as cinnamaldehyde, benzaldehyde and substituted benzaldehydes, such as veratraldehyde and panisaldehyde. It exhibits low activity towards substituted cinnamaldehydes, such as coniferaldehyde and sinapaldehyde. The enzyme has no activity with ketones, such as acetone or cyclohexanone. For the reverse reaction, linear and branched-chain primary alcohols are substrates, whereas very low activity is found with secondary alcohols, such as butan-2-ol. The enzyme may be physiologically involved in several steps of the lignin degradation pathway, initiated by other microorganisms, in the synthesis of fusel alcohols, products derived from the aminoacidic metabolism, and in the homeostasis of NADP(H). Has the ability to reduce 5-hydroxymethyl furfural (HMF), a furan derivative which is formed during the hydrolysis of lignocellulosic materials, to 5-hydroxymethylfurfuryl alcohol, thereby alleviating the inhibition of the fermentation of lignocellulose hydrolysates by HMF during fuel ethanol production. Also acts as an inhibitor of protein S-nitrosylation by mediating degradation of S-nitroso-coenzyme A (S-nitroso-CoA), a cofactor required to S-nitrosylate proteins. The polypeptide is NADP-dependent alcohol dehydrogenase 6 (Saccharomyces cerevisiae (strain ATCC 204508 / S288c) (Baker's yeast)).